Consider the following 139-residue polypeptide: Putative nickel-responsive regulator (139 aa).

Ni(2+)-binding residues include His-79, His-90, His-92, and Cys-98.

Belongs to the transcriptional regulatory CopG/NikR family. Ni(2+) serves as cofactor.

In terms of biological role, transcriptional regulator. The sequence is that of Putative nickel-responsive regulator from Nitratidesulfovibrio vulgaris (strain DSM 19637 / Miyazaki F) (Desulfovibrio vulgaris).